The chain runs to 300 residues: MLPLAFLICSGHNKGSMARAKAKDQTDGIYAAFDTLMSTAGVDSQIAALAASEADAGTLDAALTQSLQEAQGRWGLGLHHLRHEARLTDDGDIEILTDGRPSARVSEGFGALAQAYAPMQALDERGLSQWAALGEGYRAPGDLPLAQLKVLIEHARDFETDWSAGRGETFQRVWRKGDTLFVEVARPASAEAALSDAAWDVIASIKDRAFQRELMRRSEKDGMLGALLGARHAGAKANLAQLPEAHFTVQAFVQTLSGAAARNAEEYRAALKTAAAALEEYQGVTTRQLSEVLRHGLRES.

Residue threonine 88 is modified to Phosphothreonine. Serine 128 is modified (phosphoserine). Threonine 160 bears the Phosphothreonine mark.

Post-translationally, phosphorylated by RqkA in vitro. Phosphorylated primarily at Thr-88, and to a little extent at Ser-128 and Thr-160.

Its activity is regulated as follows. Phosphorylation increases DNA binding affinity. Its function is as follows. dsDNA-binding protein that contributes to the ionizing radiation resistance of D.radiodurans. Plays a role in DNA repair and genome reconstitution, and is necessary for recovery from severe genomic fragmentation as a result of exposure to severe levels of ionizing radiation. In vitro, binds to double-stranded DNA carrying strand breaks and stimulates the DNA end-joining reaction catalyzed by DNA ligases. Thus, PprA plays a critical role in a non-homologous end-joining (NHEJ) pathway for the repair of radiation-induced DNA double-strands breaks. Cannot bind to dsDNA without strand breaks or single-stranded DNA. The chain is DNA repair protein PprA (pprA) from Deinococcus radiodurans (strain ATCC 13939 / DSM 20539 / JCM 16871 / CCUG 27074 / LMG 4051 / NBRC 15346 / NCIMB 9279 / VKM B-1422 / R1).